Here is a 367-residue protein sequence, read N- to C-terminus: Heme A synthase (367 aa).

5 consecutive transmembrane segments (helical) span residues 26–46 (IRGWLAVVLFALFALVIVGGA), 111–131 (LLARSIGVIFALPLLFFWLTG), 139–159 (LPLLGILALGGFQGFIGWWMV), 174–194 (LATHLVIACLIFAACMWIYRG), and 212–232 (AGIIAAMSLFQIYLGALVAGL). His-274 lines the heme pocket. 3 consecutive transmembrane segments (helical) span residues 276–296 (AGAYLLFALAFAHMVVSLRAA), 305–325 (SVLLFVLLTVQAAIGITTLLL), and 327–347 (VPIVWGVLHQAGALVVLGFAI). His-335 serves as a coordination point for heme.

This sequence belongs to the COX15/CtaA family. Type 2 subfamily. As to quaternary structure, interacts with CtaB. The cofactor is heme b.

The protein resides in the cell membrane. The catalysed reaction is Fe(II)-heme o + 2 A + H2O = Fe(II)-heme a + 2 AH2. It functions in the pathway porphyrin-containing compound metabolism; heme A biosynthesis; heme A from heme O: step 1/1. Catalyzes the conversion of heme O to heme A by two successive hydroxylations of the methyl group at C8. The first hydroxylation forms heme I, the second hydroxylation results in an unstable dihydroxymethyl group, which spontaneously dehydrates, resulting in the formyl group of heme A. The sequence is that of Heme A synthase from Sinorhizobium fredii (strain NBRC 101917 / NGR234).